The following is a 573-amino-acid chain: Kinesin light chain 1 (573 aa).

Residues K27–K156 are a coiled coil. The segment covering K155–L176 has biased composition (basic and acidic residues). Residues K155–Q203 are disordered. S162 is subject to Phosphoserine. Low complexity predominate over residues G188–Q203. TPR repeat units lie at residues L213–T246, A255–T288, A297–V330, A339–K372, and A381–R414. A Phosphotyrosine modification is found at Y449. Position 460 is a phosphoserine (S460). Residues T464–G497 form a TPR 6 repeat. A phosphoserine; by AMPK mark is found at S521 and S524. Residue E547 is modified to Phosphoserine. Residues S553–R573 form a disordered region.

Belongs to the kinesin light chain family. As to quaternary structure, oligomeric complex composed of two heavy chains and two light chains. Interacts with SPAG9. Interacts with ATCAY; may link mitochondria to KLC1 and regulate mitochondria localization into neuron projections. Interacts (via TPR repeats) with TOR1A; the interaction associates TOR1A with the kinesin oligomeric complex. Interacts with BORCS5. Interacts with MAPK8IP3/JIP3 and NTRK2/TRKB; interaction with NTRK2/TRKB is mediated by MAPK8IP3/JIP3. Interacts with CLSTN1; phosphorylation at Ser-460 inhibits interaction with CLSTN1. (Microbial infection) Interacts with adenovirus hexon-interlacing protein; this interaction leads to capsid disruption at the nuclear pore complex during virus entry into host cell. Phosphorylation at Ser-460 by ERK inhibits interaction with CLSTN1 and localization to cytoplasmic vesicles. In terms of tissue distribution, found in a variety of tissues. Mostly abundant in brain and spine.

The protein resides in the cell projection. It is found in the growth cone. Its subcellular location is the cytoplasmic vesicle. The protein localises to the cytoplasm. It localises to the cytoskeleton. In terms of biological role, kinesin is a microtubule-associated force-producing protein that may play a role in organelle transport. The light chain may function in coupling of cargo to the heavy chain or in the modulation of its ATPase activity. This Homo sapiens (Human) protein is Kinesin light chain 1 (KLC1).